The sequence spans 381 residues: Secretion apparatus protein BsaZ (381 aa).

Helical transmembrane passes span 28 to 48 (IVAL…VDLT), 80 to 100 (IAAP…LVQS), 134 to 154 (AVKA…FADL), and 175 to 195 (IVLT…VLIV). The tract at residues 343–381 (NRGGPPREMPPEATHAPDAHGGDAASGGATSAQAGERNA) is disordered. The segment covering 364 to 381 (GDAASGGATSAQAGERNA) has biased composition (low complexity).

Belongs to the type III secretion exporter family.

It localises to the cell membrane. Part of the bsa type III secretion system, is involved in the intracellular replication of invading bacteria inside the host cell. Probably necessary for the lysis of the vacuole membrane and escape into the host cell cytoplasm. The chain is Secretion apparatus protein BsaZ (bsaZ) from Burkholderia thailandensis (strain ATCC 700388 / DSM 13276 / CCUG 48851 / CIP 106301 / E264).